Here is a 185-residue protein sequence, read N- to C-terminus: Large ribosomal subunit protein bL12c (185 aa).

Residues 1-47 (MASTALSSAFSLLSLPSSSSPAAAAAAAPRSFAVPSRARPRRAVAVV) constitute a chloroplast transit peptide.

It belongs to the bacterial ribosomal protein bL12 family.

The protein resides in the plastid. The protein localises to the chloroplast. The polypeptide is Large ribosomal subunit protein bL12c (RPL12-2) (Oryza sativa subsp. japonica (Rice)).